The chain runs to 488 residues: Ribulose bisphosphate carboxylase large chain (488 aa).

Substrate is bound by residues asparagine 127 and threonine 177. The Proton acceptor role is filled by lysine 179. Lysine 181 contacts substrate. 3 residues coordinate Mg(2+): lysine 205, aspartate 207, and glutamate 208. Lysine 205 carries the N6-carboxylysine modification. The active-site Proton acceptor is histidine 297. Arginine 298, histidine 330, and serine 382 together coordinate substrate.

Belongs to the RuBisCO large chain family. Type I subfamily. Heterohexadecamer of 8 large chains and 8 small chains. It depends on Mg(2+) as a cofactor.

The protein localises to the plastid. The protein resides in the chloroplast. It carries out the reaction 2 (2R)-3-phosphoglycerate + 2 H(+) = D-ribulose 1,5-bisphosphate + CO2 + H2O. It catalyses the reaction D-ribulose 1,5-bisphosphate + O2 = 2-phosphoglycolate + (2R)-3-phosphoglycerate + 2 H(+). RuBisCO catalyzes two reactions: the carboxylation of D-ribulose 1,5-bisphosphate, the primary event in carbon dioxide fixation, as well as the oxidative fragmentation of the pentose substrate in the photorespiration process. Both reactions occur simultaneously and in competition at the same active site. This is Ribulose bisphosphate carboxylase large chain from Porphyridium aerugineum (Red microalga).